The chain runs to 107 residues: UPF0145 protein BH1111 (107 aa).

It belongs to the UPF0145 family.

This is UPF0145 protein BH1111 from Halalkalibacterium halodurans (strain ATCC BAA-125 / DSM 18197 / FERM 7344 / JCM 9153 / C-125) (Bacillus halodurans).